The chain runs to 871 residues: Alanine--tRNA ligase (871 aa).

Positions 563, 567, 665, and 669 each coordinate Zn(2+).

This sequence belongs to the class-II aminoacyl-tRNA synthetase family. Requires Zn(2+) as cofactor.

Its subcellular location is the cytoplasm. It catalyses the reaction tRNA(Ala) + L-alanine + ATP = L-alanyl-tRNA(Ala) + AMP + diphosphate. In terms of biological role, catalyzes the attachment of alanine to tRNA(Ala) in a two-step reaction: alanine is first activated by ATP to form Ala-AMP and then transferred to the acceptor end of tRNA(Ala). Also edits incorrectly charged Ser-tRNA(Ala) and Gly-tRNA(Ala) via its editing domain. In Christiangramia forsetii (strain DSM 17595 / CGMCC 1.15422 / KT0803) (Gramella forsetii), this protein is Alanine--tRNA ligase.